Consider the following 676-residue polypeptide: Envelope glycoprotein (676 aa).

An N-terminal signal peptide occupies residues 1–32 (MEGLSLLQLPRDKFRKSSFFVWVIILFQKAFS). Topologically, residues 33–650 (MPLGVVTNST…DDNWWTGWRQ (618 aa)) are extracellular. N-linked (GlcNAc...) asparagine; by host glycosylation is present at asparagine 40. Intrachain disulfides connect cysteine 53–cysteine 609, cysteine 108–cysteine 135, cysteine 121–cysteine 147, cysteine 511–cysteine 556, and cysteine 601–cysteine 608. The interval 54 to 201 (KDHLASTDQL…TFLQSPPIRE (148 aa)) is receptor-binding. 7 N-linked (GlcNAc...) asparagine; by host glycosylation sites follow: asparagine 204, asparagine 208, asparagine 238, asparagine 257, asparagine 268, asparagine 296, and asparagine 314. The tract at residues 305 to 485 (ELSFETLSLN…STSNGLITST (181 aa)) is mucin-like region. Positions 313-351 (LNETEDDDATSSRTTKGRISDRATRKYSDLVPKDSPGMV) are disordered. Positions 330 to 344 (RISDRATRKYSDLVP) are enriched in basic and acidic residues. An N-linked (GlcNAc...) asparagine; by host glycan is attached at asparagine 366. A disordered region spans residues 406 to 458 (SSSQILSSSPTMAPSPETQTSTTYTPKLPVMTTEESTTPPRNSPGSTTEAPTL). 2 stretches are compositionally biased toward polar residues: residues 415–430 (PTMA…TTYT) and 438–458 (TEES…APTL). Asparagine 463 carries an N-linked (GlcNAc...) asparagine; by host glycan. The fusion peptide stretch occupies residues 524 to 539 (HNAAGIAWIPYFGPGA). Residues 554 to 595 (LVCGLRQLANETTQALQLFLRATTELRTYTILNRKAIDFLLR) are a coiled coil. Asparagine 563 is a glycosylation site (N-linked (GlcNAc...) asparagine; by host). Residues 615 to 634 (WTKNITDKINQIIHDFIDNP) adopt a coiled-coil conformation. An N-linked (GlcNAc...) asparagine; by host glycan is attached at asparagine 618. Residues 651–671 (WIPAGIGITGIIIAIIALLCV) traverse the membrane as a helical segment. 2 S-palmitoyl cysteine; by host lipidation sites follow: cysteine 670 and cysteine 672. Residues 672–676 (CKLLC) lie on the Cytoplasmic side of the membrane.

Belongs to the filoviruses glycoprotein family. As to quaternary structure, homotrimer; each monomer consists of a GP1 and a GP2 subunit linked by disulfide bonds. The resulting peplomers (GP1,2) protrude from the virus surface as spikes. Interacts with host integrin alpha-V/ITGAV. Interacts with host CLEC10A. Binds also to host CD209 and CLEC4M/DC-SIGN(R). Interacts with host FOLR1. Interacts with BST2; this interaction inhibits the antiviral effect of BST2 and this allows viral release from infected cells. Interacts with host FCN1; this interaction enhances viral entry. Interacts with host TLR4; this interaction induces cell death in T-lymphocytes or proinflammatory cytokines and SOCS1 production in monocytes. In terms of assembly, interacts with host entry receptor NPC1. GP1 and GP2delta are part of GP1,2delta soluble complexes released by ectodomain shedding. In terms of processing, the signal peptide region modulates GP's high mannose glycosylation, thereby determining the efficiency of the interactions with DC-SIGN(R). Post-translationally, N-glycosylated. O-glycosylated in the mucin-like region. In terms of processing, palmitoylation of GP2 is not required for its function. Post-translationally, specific enzymatic cleavages in vivo yield mature proteins. The precursor is processed into GP1 and GP2 by host cell furin in the trans Golgi, and maybe by other host proteases, to yield the mature GP1 and GP2 proteins. The cleavage site corresponds to the furin optimal cleavage sequence [KR]-X-[KR]-R. This cleavage does not seem to be required for function. After the internalization of the virus into cell endosomes, GP1 C-terminus is removed by the endosomal proteases cathepsin B, cathepsin L, or both, leaving a 19-kDa N-terminal fragment which is further digested by cathepsin B. Proteolytic processing of GP1,2 by host ADAM17 can remove the transmembrane anchor of GP2 and leads to shedding of complexes consisting in GP1 and truncated GP2 (GP1,2delta).

It is found in the virion membrane. The protein localises to the host cell membrane. Its subcellular location is the secreted. In terms of biological role, trimeric GP1,2 complexes form the virion surface spikes and mediate the viral entry processes, with GP1 acting as the receptor-binding subunit and GP2 as the membrane fusion subunit. At later times of infection, down-regulates the expression of various host cell surface molecules that are essential for immune surveillance and cell adhesion. Down-modulates several integrins including ITGA1, ITGA2, ITGA3, ITGA4, ITGA5, ITGA6, ITGAV and ITGB1. This decrease in cell adhesion molecules may lead to cell detachment, contributing to the disruption of blood vessel integrity and hemorrhages developed during infection (cytotoxicity). Interacts with host TLR4 and thereby stimulates the differentiation and activation of monocytes leading to bystander death of T-lymphocytes. Down-regulates as well the function of host natural killer cells. Counteracts the antiviral effect of host BST2/tetherin that restricts release of progeny virions from infected cells. However, cooperates with VP40 and host BST2 to activate canonical NF-kappa-B pathway in a manner dependent on neddylation. Functions as a decoy for anti-GP1,2 antibodies thereby contributing to viral immune evasion. Interacts and activates host macrophages and dendritic cells inducing up-regulation of cytokine transcription. This effect is mediated throught activation of host TLR4. Functionally, responsible for binding to the receptor(s) on target cells. Interacts with CD209/DC-SIGN and CLEC4M/DC-SIGNR which act as cofactors for virus entry into dendritic cells (DCs) and endothelial cells. Binding to the macrophage specific lectin CLEC10A also seem to enhance virus infectivity. Interaction with FOLR1/folate receptor alpha may be a cofactor for virus entry in some cell types, although results are contradictory. Members of the Tyro3 receptor tyrosine kinase family also seem to be cell entry factors in filovirus infection. Once attached, the virions are internalized through clathrin-dependent endocytosis and/or macropinocytosis. After internalization of the virus into the endosomes of the host cell, proteolysis of GP1 by two cysteine proteases, CTSB/cathepsin B and CTSL/cathepsin L removes the glycan cap and allows GP1 binding to the host entry receptor NPC1. NPC1-binding, Ca(2+) and acidic pH induce a conformational change of GP2, which unmasks its fusion peptide and permit membranes fusion. Its function is as follows. Acts as a class I viral fusion protein. Under the current model, the protein has at least 3 conformational states: pre-fusion native state, pre-hairpin intermediate state, and post-fusion hairpin state. During viral and target cell membrane fusion, the coiled coil regions (heptad repeats) assume a trimer-of-hairpins structure, positioning the fusion peptide in close proximity to the C-terminal region of the ectodomain. The formation of this structure appears to drive apposition and subsequent fusion of viral and target cell membranes. Responsible for penetration of the virus into the cell cytoplasm by mediating the fusion of the membrane of the endocytosed virus particle with the endosomal membrane. Low pH in endosomes induces an irreversible conformational change in GP2, releasing the fusion hydrophobic peptide. The chain is Envelope glycoprotein (GP) from Epomops franqueti (Franquet's epauletted fruit bat).